The following is a 184-amino-acid chain: MKKQDISVKTVVAIGIGAAVFVILGRFVVIPTGFPNTNIETSYAFLALISAIFGPFAGLMTGLIGHAIKDFTTYGSAWWSWVICSGIIGCLYGWIGLKLNLSSGRFSRKSMIYFNTGQIIANIICWALIAPTLDILIYNEPANKVYTQGVISAVLNIISVGIIGTILLKAYASSQIKKGSLRKE.

5 consecutive transmembrane segments (helical) span residues 11–31 (VVAIGIGAAVFVILGRFVVIP), 44–64 (AFLALISAIFGPFAGLMTGLI), 77–97 (AWWSWVICSGIIGCLYGWIGL), 117–137 (GQIIANIICWALIAPTLDILI), and 148–168 (QGVISAVLNIISVGIIGTILL).

Belongs to the UPF0397 family.

The protein resides in the cell membrane. This is UPF0397 protein SAR2767 from Staphylococcus aureus (strain MRSA252).